Consider the following 185-residue polypeptide: Elongation factor P (185 aa).

Belongs to the elongation factor P family.

Its subcellular location is the cytoplasm. It functions in the pathway protein biosynthesis; polypeptide chain elongation. Involved in peptide bond synthesis. Stimulates efficient translation and peptide-bond synthesis on native or reconstituted 70S ribosomes in vitro. Probably functions indirectly by altering the affinity of the ribosome for aminoacyl-tRNA, thus increasing their reactivity as acceptors for peptidyl transferase. This is Elongation factor P from Deinococcus radiodurans (strain ATCC 13939 / DSM 20539 / JCM 16871 / CCUG 27074 / LMG 4051 / NBRC 15346 / NCIMB 9279 / VKM B-1422 / R1).